The chain runs to 355 residues: Iron deficiency-induced protein A (355 aa).

The tat-type signal signal peptide spans 1-34 (MEKVGRRVFLGMGAAATAYVTHHLWNQNAESSYA). Fe cation-binding residues include histidine 49, tyrosine 50, tyrosine 180, tyrosine 236, and tyrosine 237.

It belongs to the bacterial solute-binding protein 1 family. Predicted to be exported by the Tat system. The position of the signal peptide cleavage has not been experimentally proven.

The protein localises to the cellular thylakoid membrane. Functionally, plays an important role in protecting the acceptor side of photosystem II (PSII) against oxidative damage, especially under iron-limiting growth conditions. In terms of biological role, may also be part of a periplasmic ABC transporter complex involved in iron import. The protein is Iron deficiency-induced protein A (idiA) of Thermosynechococcus vestitus (strain NIES-2133 / IAM M-273 / BP-1).